Consider the following 555-residue polypeptide: Formate--tetrahydrofolate ligase (555 aa).

Residue 65–72 (TPAGEGKT) coordinates ATP.

This sequence belongs to the formate--tetrahydrofolate ligase family.

It carries out the reaction (6S)-5,6,7,8-tetrahydrofolate + formate + ATP = (6R)-10-formyltetrahydrofolate + ADP + phosphate. It functions in the pathway one-carbon metabolism; tetrahydrofolate interconversion. This Paracoccus denitrificans (strain Pd 1222) protein is Formate--tetrahydrofolate ligase.